A 185-amino-acid chain; its full sequence is Ribosome-recycling factor (185 aa).

Belongs to the RRF family.

The protein localises to the cytoplasm. Functionally, responsible for the release of ribosomes from messenger RNA at the termination of protein biosynthesis. May increase the efficiency of translation by recycling ribosomes from one round of translation to another. The protein is Ribosome-recycling factor of Geobacillus thermodenitrificans (strain NG80-2).